Reading from the N-terminus, the 353-residue chain is Green-sensitive opsin-2 (353 aa).

At 1–47 the chain is on the extracellular side; it reads MAAHEPVFAARRHNEDTTRESAFVYTNANNTRDPFEGPNYHIAPRWV. An N-linked (GlcNAc...) asparagine glycan is attached at N29. The chain crosses the membrane as a helical span at residues 48-72; the sequence is YNVSSLWMIFVVIASVFTNGLVIVA. Residues 73–84 lie on the Cytoplasmic side of the membrane; sequence TAKFKKLRHPLN. The chain crosses the membrane as a helical span at residues 85–110; sequence WILVNLAIADLGETVLASTISVINQI. At 111-124 the chain is on the extracellular side; the sequence is FGYFILGHPMCVFE. C121 and C198 are joined by a disulfide. The chain crosses the membrane as a helical span at residues 125 to 144; sequence GWTVSVCGITALWSLTIISW. Topologically, residues 145 to 163 are cytoplasmic; it reads ERWVVVCKPFGNVKFDGKW. A helical transmembrane segment spans residues 164-187; sequence AAGGIIFSWVWAIIWCTPPIFGWS. Residues 188–213 lie on the Extracellular side of the membrane; sequence RYWPHGLKTSCGPDVFSGSEDPGVAS. Residues 214–241 form a helical membrane-spanning segment; sequence YMITLMLTCCILPLSIIIICYIFVWSAI. Residues 242–263 lie on the Cytoplasmic side of the membrane; it reads HQVAQQQKDSESTQKAEKEVSR. The helical transmembrane segment at 264–287 threads the bilayer; that stretch reads MVVVMILAFIVCWGPYASFATFSA. The Extracellular segment spans residues 288–295; it reads VNPGYAWH. Residues 296-320 form a helical membrane-spanning segment; sequence PLAAAMPAYFAKSATIYNPIIYVFM. An N6-(retinylidene)lysine modification is found at K307. At 321–353 the chain is on the cytoplasmic side; that stretch reads NRQFRSCIMQLFGKKVEDASEVSGSTTEVSTAS.

It belongs to the G-protein coupled receptor 1 family. Opsin subfamily. The color pigments are found in the cone photoreceptor cells.

The protein localises to the membrane. Visual pigments are the light-absorbing molecules that mediate vision. They consist of an apoprotein, opsin, covalently linked to cis-retinal. This Psalidodon fasciatus (Banded astyanax) protein is Green-sensitive opsin-2 (G101).